Reading from the N-terminus, the 277-residue chain is Urease accessory protein UreD (277 aa).

This sequence belongs to the UreD family. As to quaternary structure, ureD, UreF and UreG form a complex that acts as a GTP-hydrolysis-dependent molecular chaperone, activating the urease apoprotein by helping to assemble the nickel containing metallocenter of UreC. The UreE protein probably delivers the nickel.

Its subcellular location is the cytoplasm. Its function is as follows. Required for maturation of urease via the functional incorporation of the urease nickel metallocenter. This chain is Urease accessory protein UreD, found in Rhodopseudomonas palustris (strain BisB18).